Here is a 486-residue protein sequence, read N- to C-terminus: Arginine/agmatine antiporter (486 aa).

Helical transmembrane passes span 12–32 (LGAI…GIFS), 41–61 (AGVG…FFIA), 85–105 (GFGP…QIFG), 132–152 (PAIL…LKGI), 160–180 (IIGT…TAFL), 211–231 (STML…VMSA), 242–262 (ATIL…ILPF), 296–316 (VGLL…VAEI), 341–361 (VSLY…YFST), 367–387 (MLSI…AFLV), 418–438 (IWLI…LLAL), and 461–481 (EVTE…LFST).

The protein belongs to the amino acid-polyamine-organocation (APC) superfamily. Basic amino acid/polyamine antiporter (APA) (TC 2.A.3.2) family.

It localises to the cell inner membrane. In terms of biological role, catalyzes the exchange of L-arginine for agmatine. The arginine uptake by the bacterium in the macrophage may be a virulence factor against the host innate immune response. This is Arginine/agmatine antiporter (aaxC) from Chlamydia abortus (strain DSM 27085 / S26/3) (Chlamydophila abortus).